A 323-amino-acid polypeptide reads, in one-letter code: Tumor-associated calcium signal transducer 2 (323 aa).

The first 26 residues, 1–26 (MARGPGLAPPPLRLPLLLLVLAAVTG), serve as a signal peptide directing secretion. At 27 to 274 (HTAAQDNCTC…PPKFSMKRLT (248 aa)) the chain is on the extracellular side. N-linked (GlcNAc...) asparagine glycosylation occurs at N33. One can recognise a Thyroglobulin type-1 domain in the interval 70 to 145 (TSKCLLLKAR…TDKGDLSLRC (76 aa)). Intrachain disulfides connect C73–C108, C119–C125, and C127–C145. N-linked (GlcNAc...) asparagine glycosylation is present at N120. N168 and N208 each carry an N-linked (GlcNAc...) asparagine glycan. The helical transmembrane segment at 275 to 297 (AGLIAVIVVVVVALVAGMAVLVI) threads the bilayer. Residues 298-323 (TNRRKSGKYKKVEIKELGELRKEPSL) lie on the Cytoplasmic side of the membrane.

It belongs to the EPCAM family. In terms of processing, the N-terminus is blocked. Placenta, pancreatic carcinoma cell lines.

The protein resides in the membrane. Its function is as follows. May function as a growth factor receptor. In Homo sapiens (Human), this protein is Tumor-associated calcium signal transducer 2 (TACSTD2).